A 212-amino-acid chain; its full sequence is Large ribosomal subunit protein uL4 (212 aa).

The disordered stretch occupies residues 45 to 71 (RQGNASTKTRAEVRGGGRKPWRQKGTG). Residues 60–71 (GGRKPWRQKGTG) are compositionally biased toward basic residues.

It belongs to the universal ribosomal protein uL4 family. In terms of assembly, part of the 50S ribosomal subunit.

Its function is as follows. One of the primary rRNA binding proteins, this protein initially binds near the 5'-end of the 23S rRNA. It is important during the early stages of 50S assembly. It makes multiple contacts with different domains of the 23S rRNA in the assembled 50S subunit and ribosome. In terms of biological role, forms part of the polypeptide exit tunnel. This is Large ribosomal subunit protein uL4 from Nostoc punctiforme (strain ATCC 29133 / PCC 73102).